A 268-amino-acid polypeptide reads, in one-letter code: Exodeoxyribonuclease III (268 aa).

Glu34 lines the Mg(2+) pocket. Tyr109 is an active-site residue. Residues Asp151, Asn153, and Asp258 each contribute to the Mg(2+) site. The active-site Proton donor/acceptor is Asp151.

Belongs to the DNA repair enzymes AP/ExoA family. As to quaternary structure, monomer. The cofactor is Mg(2+). Requires Mn(2+) as cofactor.

It catalyses the reaction Exonucleolytic cleavage in the 3'- to 5'-direction to yield nucleoside 5'-phosphates.. In terms of biological role, major apurinic-apyrimidinic endonuclease of E.coli. It removes the damaged DNA at cytosines and guanines by cleaving on the 3'-side of the AP site by a beta-elimination reaction. It exhibits 3'-5'-exonuclease, 3'-phosphomonoesterase, 3'-repair diesterase and ribonuclease H activities. In Salmonella typhi, this protein is Exodeoxyribonuclease III (xthA).